A 214-amino-acid chain; its full sequence is ER lumen protein-retaining receptor (214 aa).

The Lumenal segment spans residues 1-4 (MVFN). The chain crosses the membrane as a helical span at residues 5-23 (LFRISADLVHLLSIYFLLT). The Cytoplasmic segment spans residues 24–37 (KIISHKNCIGISLR). The chain crosses the membrane as a helical span at residues 38 to 55 (SQILFFIVWVTRYLDIFY). The Lumenal portion of the chain corresponds to 56–63 (NFYSLYNT). Residues 64–82 (ILKIVYLTTSAYTIYLISK) form a helical membrane-spanning segment. Over 83-98 (RFRATYDKIHDTLNVW) the chain is Cytoplasmic. A helical transmembrane segment spans residues 99–112 (YLIVPCIVLAFIFT). At 113 to 119 (EDYSITE) the chain is on the lumenal side. Residues 120-139 (ICWTFSIFLEAVAILPQILL) form a helical membrane-spanning segment. Topologically, residues 140-151 (LRSTGEVENLNS) are cytoplasmic. Residues 152-170 (QYIFCLGLYRALYIINWIY) traverse the membrane as a helical segment. At 171–181 (RYATEQSYWSP) the chain is on the lumenal side. The chain crosses the membrane as a helical span at residues 182 to 202 (LTWICGSIQTLLYVEYFYYYI). At 203–214 (KSRVEGTKFVLP) the chain is on the cytoplasmic side.

The protein belongs to the ERD2 family.

The protein resides in the endoplasmic reticulum membrane. Its function is as follows. Required for the retention of luminal endoplasmic reticulum proteins. Determines the specificity of the luminal ER protein retention system. Also required for normal vesicular traffic through the Golgi. This chain is ER lumen protein-retaining receptor, found in Entamoeba histolytica (strain ATCC 30459 / HM-1:IMSS / ABRM).